Here is a 232-residue protein sequence, read N- to C-terminus: UPF0758 protein BH3032 (232 aa).

One can recognise an MPN domain in the interval 107-229 (VIRTPEDVSR…FVSLKEKGHL (123 aa)). Residues His178, His180, and Asp191 each coordinate Zn(2+). A JAMM motif motif is present at residues 178–191 (HNHPSGDPTPSRED).

Belongs to the UPF0758 family.

The sequence is that of UPF0758 protein BH3032 from Halalkalibacterium halodurans (strain ATCC BAA-125 / DSM 18197 / FERM 7344 / JCM 9153 / C-125) (Bacillus halodurans).